Reading from the N-terminus, the 451-residue chain is MDIATEWTTNANEALTITLEPSKGKGKGKEVSNGSEKSHVFNPIFTYPIYGDVETILGYKNFELNLKMDASTMLPLVTVKFSDKLEFDGISFDDPVERLLEFLPEETATDEAEWEEKRVKELGDGFKPVGKEFGTFSVNSEKYTVHRSTLLDPETLKLHLRLQIFVPLFIEAGSYIDNEDDRWEIYIVYNAEKEIVGFSTVYCYWFYEPSAKESKAPKDASLEQLQKQPFSPTLRKRISQYVILPPFQGKGLGGQLYTLLFSRFYADPNVYEITVEDPSEAFDDLRDRCDLKWLADQGFPSEVFRMLQTTSAHGEKAGDNRTGRTKVVAGAFWTKWLEEHRLKYKLAHRQFARCFEMILLACLEVSSPTKKRNIKDARLFIKKRVYVRNREFLEELGGKIEVMSKLQETYESMEEDYARIMKPVLGYVKDGLKKRDRNDAGNEEAKRVKVE.

Interaction with histone H4 N-terminus regions lie at residues 52–54 (DVE) and 202–204 (YCY). Acetyl-CoA contacts are provided by residues 241–243 (YVI) and 248–254 (QGKGLGG). Glu276 serves as the catalytic Proton donor/acceptor.

This sequence belongs to the HAT1 family. In terms of assembly, component of the HAT-B complex composed of at least HAT1 and HAT2. The HAT-B complex binds to histone H4 tail.

It localises to the cytoplasm. The protein localises to the nucleus. The catalysed reaction is L-lysyl-[protein] + acetyl-CoA = N(6)-acetyl-L-lysyl-[protein] + CoA + H(+). In terms of biological role, catalytic component of the histone acetylase B (HAT-B) complex. Acetylates 'Lys-12' of histone H4 which is required for telomeric silencing. Has intrinsic substrate specificity that modifies lysine in recognition sequence GXGKXG. Involved in DNA double-strand break repair. The sequence is that of Histone acetyltransferase type B catalytic subunit (HAT1) from Yarrowia lipolytica (strain CLIB 122 / E 150) (Yeast).